The sequence spans 492 residues: MPTNGLHQVLKIQFGLVNDTDRYLTAESFGFKVNASAPSLKRKQMWVLEPDPGEGTAVLFRSSHLGRYLSAEEDGRVACEAERPGRDCRFLVLPQPDGRWVLQSEPHGRFFGGTEDQLSCFATAITPAELWTVHLAIHPQAHLLSVSRRRYAHLCPQEDEIAADSNTPWGVDALVTLIFQNRQYCLKSCDSRYLRSDGRLVWEPEARARYTLEFKAGKLAFKDCDGHYLAPVGPAGTLRAGRNTRPGKDELFDLEESHPQVVLVAANHRYVSVRQGVNVSANQDEELDHETFLMQIDQETKKCTFYSSTGGYWTLVTHGGIQATATQVSENTMFEMEWRGRRVALKASNGRYVCMKKNGQLAAISDFVGEDEEFTLKLINRPILVLRGLDGFVCHRRGSNQLDTNRSVYDVFHLSFSDGAYQIRGRGGGFWHTGSHGSVCSDGERAEDFLFEFRERGRLAIRARSGKYLRGGASGLLRADADAPAGVALWEY.

The protein belongs to the fascin family. As to expression, exclusively expressed in the eye, specifically in photoreceptor cells.

The protein resides in the cytoplasm. The protein localises to the cytoskeleton. It localises to the cell projection. Its subcellular location is the stereocilium. Acts as an actin bundling protein. May play a pivotal role in photoreceptor cell-specific events, such as disk morphogenesis. The sequence is that of Fascin-2 (FSCN2) from Bos taurus (Bovine).